The primary structure comprises 109 residues: Matrix protein 2 (109 aa).

At methionine 1 to proline 4 the chain is on the virion surface side. A helical; Signal-anchor for type III membrane protein transmembrane segment spans residues phenylalanine 5 to histidine 27. Residues leucine 28 to histidine 109 lie on the Intravirion side of the membrane. The stretch at histidine 58 to aspartate 83 forms a coiled coil.

As to quaternary structure, homotetramer. Phosphorylated by host.

Its subcellular location is the virion membrane. The protein localises to the host cell membrane. In terms of biological role, forms presumably a highly low-pH gated proton-selective channel. Trp-23 may function as a minimalistic gate that opens and closes the pore. When the environmental pH is lower than a threshold, the BM2 channel would be activated and selectively transport protons across the membrane from the extracellular side to the cytoplasmic side. Crucial for the uncoating process. When the virion is internalized into the endosome, the channel acidifies the virion's interior, promoting the dissociation of matrix protein 1 (M1) from the ribonucleoprotein (RNP) thus allowing the transport of the RNP from the virion into the cell's nucleus. Also plays a role in viral proteins secretory pathway. Elevates the intravesicular pH of normally acidic compartments, such as trans-Golgi network, preventing newly formed hemagglutinin from premature switching to the fusion-active conformation. Plays a crucial role in virion assembly. Expressed in the late phase of the infection. This chain is Matrix protein 2 (M), found in Influenza B virus (strain B/Memphis/12/1997).